Reading from the N-terminus, the 353-residue chain is Stearoyl-CoA desaturase 4 (353 aa).

Positions 1–42 are disordered; that stretch reads MTAHLPQEISSRCSTTNIMEPHSRRQQDGEEKMPLQAEDIRP. The Cytoplasmic segment spans residues 1–66; the sequence is MTAHLPQEIS…EGPPPKLEYV (66 aa). Positions 8–18 are enriched in polar residues; the sequence is EISSRCSTTNI. Residues 21-42 are compositionally biased toward basic and acidic residues; it reads PHSRRQQDGEEKMPLQAEDIRP. A helical transmembrane segment spans residues 67 to 87; it reads WRNIIFMALLHVGALYGITLV. Asn-69 serves as a coordination point for substrate. Topologically, residues 88–91 are lumenal; sequence PSCK. A helical transmembrane segment spans residues 92–112; it reads VYTWLLGVFYNVVAGLGITAG. Residues 113 to 211 lie on the Cytoplasmic side of the membrane; that stretch reads AHRLWSHRTY…EKLVMFQRRY (99 aa). Fe cation contacts are provided by His-114 and His-119. Positions 114-119 match the Histidine box-1 motif; sequence HRLWSH. The substrate site is built by Asn-142, Arg-149, and Asp-150. 3 residues coordinate Fe cation: His-151, His-154, and His-155. The Histidine box-2 signature appears at 151 to 155; the sequence is HRAHH. Substrate is bound by residues Arg-182 and Lys-183. Residues 212-231 traverse the membrane as a helical segment; that stretch reads YKLAVTLMFIILPTLVPWYL. Residues 232–235 lie on the Lumenal side of the membrane; it reads WGET. A helical membrane pass occupies residues 236-257; sequence FQHSLCVSNFLRYAVLLNFTWL. Trp-256 is a substrate binding site. Topologically, residues 258 to 353 are cytoplasmic; sequence VNSAAHLYGY…RTGDGSHKSS (96 aa). Fe cation-binding residues include His-263, His-292, His-295, and His-296. The Histidine box-3 motif lies at 292 to 296; that stretch reads HNYHH.

Belongs to the fatty acid desaturase type 1 family. Fe(2+) is required as a cofactor. Detected in heart, but not in brain, liver, skin or adipose tissue.

It is found in the endoplasmic reticulum membrane. The protein localises to the microsome membrane. It carries out the reaction octadecanoyl-CoA + 2 Fe(II)-[cytochrome b5] + O2 + 2 H(+) = (9Z)-octadecenoyl-CoA + 2 Fe(III)-[cytochrome b5] + 2 H2O. It catalyses the reaction hexadecanoyl-CoA + 2 Fe(II)-[cytochrome b5] + O2 + 2 H(+) = (9Z)-hexadecenoyl-CoA + 2 Fe(III)-[cytochrome b5] + 2 H2O. Its function is as follows. Stearoyl-CoA desaturase that utilizes O(2) and electrons from reduced cytochrome b5 to introduce the first double bond into saturated fatty acyl-CoA substrates. Catalyzes the insertion of a cis double bond at the delta-9 position into fatty acyl-CoA substrates including palmitoyl-CoA and stearoyl-CoA. Required for the biosynthesis of membrane phospholipids, cholesterol esters and triglycerides. The polypeptide is Stearoyl-CoA desaturase 4 (Mus musculus (Mouse)).